The primary structure comprises 425 residues: Serine--tRNA ligase (425 aa).

L-serine is bound at residue 230-232; that stretch reads TAE. Residue 261 to 263 coordinates ATP; sequence RAE. Glutamate 284 is a binding site for L-serine. 348–351 contacts ATP; the sequence is EISS. Position 384 (serine 384) interacts with L-serine.

Belongs to the class-II aminoacyl-tRNA synthetase family. Type-1 seryl-tRNA synthetase subfamily. As to quaternary structure, homodimer. The tRNA molecule binds across the dimer.

The protein resides in the cytoplasm. It carries out the reaction tRNA(Ser) + L-serine + ATP = L-seryl-tRNA(Ser) + AMP + diphosphate + H(+). It catalyses the reaction tRNA(Sec) + L-serine + ATP = L-seryl-tRNA(Sec) + AMP + diphosphate + H(+). Its pathway is aminoacyl-tRNA biosynthesis; selenocysteinyl-tRNA(Sec) biosynthesis; L-seryl-tRNA(Sec) from L-serine and tRNA(Sec): step 1/1. Functionally, catalyzes the attachment of serine to tRNA(Ser). Is also able to aminoacylate tRNA(Sec) with serine, to form the misacylated tRNA L-seryl-tRNA(Sec), which will be further converted into selenocysteinyl-tRNA(Sec). This is Serine--tRNA ligase from Desulforudis audaxviator (strain MP104C).